Here is a 358-residue protein sequence, read N- to C-terminus: tRNA N6-adenosine threonylcarbamoyltransferase (358 aa).

Residues His-118 and His-122 each coordinate Fe cation. Residues 143-147 (IVSGG), Asp-176, Gly-189, and Asn-298 each bind substrate. A Fe cation-binding site is contributed by Asp-326.

Belongs to the KAE1 / TsaD family. Fe(2+) serves as cofactor.

It localises to the cytoplasm. It catalyses the reaction L-threonylcarbamoyladenylate + adenosine(37) in tRNA = N(6)-L-threonylcarbamoyladenosine(37) in tRNA + AMP + H(+). In terms of biological role, required for the formation of a threonylcarbamoyl group on adenosine at position 37 (t(6)A37) in tRNAs that read codons beginning with adenine. Is involved in the transfer of the threonylcarbamoyl moiety of threonylcarbamoyl-AMP (TC-AMP) to the N6 group of A37, together with TsaE and TsaB. TsaD likely plays a direct catalytic role in this reaction. This Rhodopirellula baltica (strain DSM 10527 / NCIMB 13988 / SH1) protein is tRNA N6-adenosine threonylcarbamoyltransferase.